We begin with the raw amino-acid sequence, 344 residues long: Protein BREVIS RADIX (344 aa).

Residues 139 to 194 (KEWMAQVEPGVHITFASLPTGGNDLKRIRFSREMFDKWQAQRWWGENYDKIVELYN) enclose the BRX 1 domain. The disordered stretch occupies residues 203–286 (LQTPARSDDQ…DPPSMSNASE (84 aa)). Positions 223–233 (DSARESKDWTP) are enriched in basic and acidic residues. The span at 248 to 264 (YGGSSNYGPGSYHGGPP) shows a compositional bias: low complexity. The 56-residue stretch at 289-344 (AEWIEEDEPGVYITIRQLSDGTRELRRVRFSRERFGEVHAKTWWEQNRERIQTQYL) folds into the BRX 2 domain.

It belongs to the BRX family. Homodimer and heterodimer with BRXL1. Interacts with NGA1 and ARF5. In terms of tissue distribution, expressed in the developing protophloem up to the elongation zone in root meristem of young seedlings, in the columella and the phloem vasculature throughout the root and in the phloem vasculature in the shoot. Detected in the shoot meristem and in primordia. Low expression in stomata. Confined to sieve element precursor cells and to protophloem.

Its subcellular location is the nucleus. The protein localises to the cell membrane. Functionally, acts as a regulator of cell proliferation and elongation in the root and shoot. Regulates roots architecture and primary root protophloem differentiation. BRX, BAM3, and CLE45 act together to regulate the transition of protophloem cells from proliferation to differentiation, thus impinging on postembryonic growth capacity of the root meristem. Probable transcription regulator. Regulated by the auxin response factor ARF5. Polarly localized in vascular cells and subject to endocytic recycling. Required for CPD expression and for correct nuclear auxin response. Mediates cross-talk between the auxin and brassinosteroid pathways. BRX is a target for auxin-induced, proteasome-mediated degradation. In Arabidopsis thaliana (Mouse-ear cress), this protein is Protein BREVIS RADIX.